The primary structure comprises 185 residues: Ribosome-recycling factor (185 aa).

It belongs to the RRF family.

Its subcellular location is the cytoplasm. Responsible for the release of ribosomes from messenger RNA at the termination of protein biosynthesis. May increase the efficiency of translation by recycling ribosomes from one round of translation to another. The sequence is that of Ribosome-recycling factor from Pseudomonas syringae pv. tomato (strain ATCC BAA-871 / DC3000).